Here is a 430-residue protein sequence, read N- to C-terminus: Shufflon protein A' (430 aa).

The tract at residues 1–361 (MKKYDRGWAS…TGAILSCQSG (361 aa)) is constant region. A variable region region spans residues 362–430 (TWGTIGGKLK…GCIASCVTLN (69 aa)).

This Escherichia coli protein is Shufflon protein A'.